The following is a 483-amino-acid chain: Cobyric acid synthase (483 aa).

Residues 251–438 (SLVVAVPMLP…LHGVFNADEF (188 aa)) form the GATase cobBQ-type domain. Residue Cys-333 is the Nucleophile of the active site. His-430 is a catalytic residue.

Belongs to the CobB/CobQ family. CobQ subfamily.

It functions in the pathway cofactor biosynthesis; adenosylcobalamin biosynthesis. Its function is as follows. Catalyzes amidations at positions B, D, E, and G on adenosylcobyrinic A,C-diamide. NH(2) groups are provided by glutamine, and one molecule of ATP is hydrogenolyzed for each amidation. The polypeptide is Cobyric acid synthase (Brucella anthropi (strain ATCC 49188 / DSM 6882 / CCUG 24695 / JCM 21032 / LMG 3331 / NBRC 15819 / NCTC 12168 / Alc 37) (Ochrobactrum anthropi)).